The following is a 368-amino-acid chain: C-glycoside deglycosidase alpha subunit (368 aa).

Residue E145 participates in a divalent metal cation binding. H147 acts as the Proton acceptor in catalysis. 3 residues coordinate a divalent metal cation: D177, H275, and E311.

This sequence belongs to the C-glycoside deglycosidase alpha subunit family. Heterodimer composed of an alpha subunit (CarB) and a beta subunit (CarC). It depends on a divalent metal cation as a cofactor.

The catalysed reaction is 3''-dehydroisovitexin = 1,5-anhydro-D-erythro-hex-1-en-3-ulose + apigenin. It catalyses the reaction 3''-dehydroisoorientin = 1,5-anhydro-D-erythro-hex-1-en-3-ulose + luteolin. In terms of biological role, carbon-carbon bond-cleaving enzyme which participates in the metabolism of C-glycosides. Acts on the C6-glycosylated compounds 3''-dehydroisovitexin (3''-oxo-isovitexin) and 3''-dehydroisoorientin (3''-oxo-homoorientin). Shows weak activity with 3'-dehydromangiferin (3'-oxo-mangiferin). The sequence is that of C-glycoside deglycosidase alpha subunit from Microbacterium trichothecenolyticum (Aureobacterium trichothecenolyticum).